The primary structure comprises 263 residues: Serine protease ami (263 aa).

The first 21 residues, M1–C21, serve as a signal peptide directing secretion. N2 carries N-linked (GlcNAc...) asparagine glycosylation. A propeptide spans R22 to R26 (activation peptide). The 228-residue stretch at I27–Y254 folds into the Peptidase S1 domain. A disulfide bond links C52 and C68. Catalysis depends on H67, which acts as the Charge relay system. N-linked (GlcNAc...) asparagine glycosylation is found at N73, N74, and N108. D115 acts as the Charge relay system in catalysis. Disulfide bonds link C149/C215, C180/C196, and C205/C230. S209 acts as the Charge relay system in catalysis. N-linked (GlcNAc...) asparagine glycosylation is present at N255.

The protein belongs to the peptidase S1 family. In the embryo, localizes to paraxial regions at the neurula stage and anterior ventral regions at the tailbud stage. From the late tailbud to tadpole stage, expressed along the forming blood vessels including the anterior cardinal veins, posterior cardinal veins, intersomitic veins, dorsal longitudinal anastomosing vessel, dorsal aorta, pronephric sinus and most prominently around the vascular vitelline network, where expression shows left-right asymmetry in the stage 42 embryo. Localizes to endothelial cells. In adults, shows highest expression in liver with moderate levels of expression in the fat body, lung, gut and vessels. Weakly expressed in adult heart, muscle, testis and ovary.

It localises to the secreted. Probable serine protease. The polypeptide is Serine protease ami (Xenopus laevis (African clawed frog)).